Reading from the N-terminus, the 869-residue chain is Protein translocase subunit SecA (869 aa).

Residues Q88, 106–110, and D509 each bind ATP; that span reads GEGKT. Positions 818 to 840 are enriched in basic and acidic residues; the sequence is QDEGLKFNQREGEDAPAVREKKI. The segment at 818 to 869 is disordered; the sequence is QDEGLKFNQREGEDAPAVREKKIPRNSPCPCGSGKKYKDCCGKSGPKKGILA. 4 residues coordinate Zn(2+): C846, C848, C857, and C858.

The protein belongs to the SecA family. Monomer and homodimer. Part of the essential Sec protein translocation apparatus which comprises SecA, SecYEG and auxiliary proteins SecDF-YajC and YidC. Zn(2+) serves as cofactor.

It is found in the cell inner membrane. The protein resides in the cytoplasm. It catalyses the reaction ATP + H2O + cellular proteinSide 1 = ADP + phosphate + cellular proteinSide 2.. Functionally, part of the Sec protein translocase complex. Interacts with the SecYEG preprotein conducting channel. Has a central role in coupling the hydrolysis of ATP to the transfer of proteins into and across the cell membrane, serving as an ATP-driven molecular motor driving the stepwise translocation of polypeptide chains across the membrane. This chain is Protein translocase subunit SecA, found in Campylobacter curvus (strain 525.92).